The sequence spans 526 residues: Putative bifunctional polymyxin resistance protein ArnA (526 aa).

Residues 1–170 (MVKRADAGAI…TLGLVQGSRL (170 aa)) form a formyltransferase ArnAFT region. Residue 2-6 (VKRAD) coordinates (6R)-10-formyltetrahydrofolate. The interval 180–526 (RRTRVLILGV…RTVDLTDKPS (347 aa)) is dehydrogenase ArnADH. Residues Asp213 and 234-235 (DI) contribute to the NAD(+) site. Residues Ala259, Tyr264, and 298–299 (TS) each bind UDP-alpha-D-glucuronate. Glu300 serves as the catalytic Proton acceptor; for decarboxylase activity. UDP-alpha-D-glucuronate is bound by residues Arg326, Asn358, 392–401 (KLIDGGKQKR), and Tyr479. Arg485 acts as the Proton donor; for decarboxylase activity in catalysis.

This sequence in the N-terminal section; belongs to the Fmt family. UDP-L-Ara4N formyltransferase subfamily. In the C-terminal section; belongs to the NAD(P)-dependent epimerase/dehydratase family. UDP-glucuronic acid decarboxylase subfamily. In terms of assembly, homohexamer, formed by a dimer of trimers.

It carries out the reaction UDP-alpha-D-glucuronate + NAD(+) = UDP-beta-L-threo-pentopyranos-4-ulose + CO2 + NADH. It catalyses the reaction UDP-4-amino-4-deoxy-beta-L-arabinose + (6R)-10-formyltetrahydrofolate = UDP-4-deoxy-4-formamido-beta-L-arabinose + (6S)-5,6,7,8-tetrahydrofolate + H(+). The protein operates within nucleotide-sugar biosynthesis; UDP-4-deoxy-4-formamido-beta-L-arabinose biosynthesis; UDP-4-deoxy-4-formamido-beta-L-arabinose from UDP-alpha-D-glucuronate: step 1/3. It functions in the pathway nucleotide-sugar biosynthesis; UDP-4-deoxy-4-formamido-beta-L-arabinose biosynthesis; UDP-4-deoxy-4-formamido-beta-L-arabinose from UDP-alpha-D-glucuronate: step 3/3. It participates in bacterial outer membrane biogenesis; lipopolysaccharide biosynthesis. Functionally, bifunctional enzyme that catalyzes the oxidative decarboxylation of UDP-glucuronic acid (UDP-GlcUA) to UDP-4-keto-arabinose (UDP-Ara4O) and the addition of a formyl group to UDP-4-amino-4-deoxy-L-arabinose (UDP-L-Ara4N) to form UDP-L-4-formamido-arabinose (UDP-L-Ara4FN). The modified arabinose is attached to lipid A and is required for resistance to polymyxin and cationic antimicrobial peptides. This Shigella boydii serotype 18 (strain CDC 3083-94 / BS512) protein is Putative bifunctional polymyxin resistance protein ArnA (arnA).